The sequence spans 429 residues: Hydrogenobyrinate a,c-diamide synthase (429 aa).

A GATase cobBQ-type domain is found at 240-429; sequence RTAVARDVAF…SFMHLIDFSE (190 aa). Cys-323 functions as the Nucleophile in the catalytic mechanism.

This sequence belongs to the CobB/CbiA family. The cofactor is Mg(2+).

The catalysed reaction is hydrogenobyrinate + 2 L-glutamine + 2 ATP + 2 H2O = hydrogenobyrinate a,c-diamide + 2 L-glutamate + 2 ADP + 2 phosphate + 2 H(+). Its pathway is cofactor biosynthesis; adenosylcobalamin biosynthesis; cob(II)yrinate a,c-diamide from precorrin-2 (aerobic route): step 9/10. In terms of biological role, catalyzes the ATP-dependent amidation of the two carboxylate groups at positions a and c of hydrogenobyrinate, using either L-glutamine or ammonia as the nitrogen source. The sequence is that of Hydrogenobyrinate a,c-diamide synthase from Rhizobium meliloti (strain 1021) (Ensifer meliloti).